Here is a 529-residue protein sequence, read N- to C-terminus: Delayed-rectifier potassium channel regulatory subunit KCNS1 (529 aa).

Residues 1–217 (MLMLLVRGTH…LTMENPGYSL (217 aa)) are Cytoplasmic-facing. The helical transmembrane segment at 218 to 239 (PSKLFSCVSISVVLASIAAMCI) threads the bilayer. The Extracellular segment spans residues 240–270 (HSLPEYQAREAAAAVAAVAAGRSPEGVRDDP). A helical transmembrane segment spans residues 271-293 (VLRRLEYFCIAWFSFEVSSRLLL). The Cytoplasmic segment spans residues 294 to 304 (APSTRNFFCHP). A helical membrane pass occupies residues 305-322 (LNLIDIVSVLPFYLTLLA). At 323 to 340 (GVALGDQGGTGGKELGHL) the chain is on the extracellular side. Residues 341-361 (GKVVQVFRLMRIFRVLKLARH) form a helical; Voltage-sensor membrane-spanning segment. At 362–376 (STGLRSLGATLKHSY) the chain is on the cytoplasmic side. The helical transmembrane segment at 377–398 (REVGILLLYLAVGVSVFSGVAY) threads the bilayer. Over 399 to 411 (TAEKEEDVGFNTI) the chain is Extracellular. The segment at residues 412–423 (PACWWWGTVSMT) is an intramembrane region (helical). Residues 424–429 (TVGYGD) carry the Selectivity filter motif. Residues 424 to 431 (TVGYGDVV) lie within the membrane without spanning it. The Extracellular portion of the chain corresponds to 432–438 (PVTVAGK). The chain crosses the membrane as a helical span at residues 439–467 (LAASGCILGGILVVALPITIIFNKFSHFY). Residues 468–529 (RRQKALEAAV…PSEPPHPQMY (62 aa)) are Cytoplasmic-facing. A disordered region spans residues 496–529 (SEASLETSRETSQEGRSADLETQAPSEPPHPQMY). Residues 502 to 514 (TSRETSQEGRSAD) are compositionally biased toward basic and acidic residues.

This sequence belongs to the potassium channel family. S (TC 1.A.1.2) subfamily. Kv9.1/KCNS1 sub-subfamily. Heterotetramer with KCNB1. Heterotetramer with KCNB2. Does not form homomultimers.

It is found in the cell membrane. Functionally, potassium channel regulatory subunit that modulate the delayed rectifier voltage-gated potassium channel activity of KCNB1 and KCNB2 by altering their kinetics, expression levels, and shifting the half-inactivation potential to more polarized values. While it does not form functional channels on its own, it can form functional heterotetrameric channels with KCNB1 and KCNB2. Each regulatory subunit has unique regulatory properties that can lead to extensive inhibition, significant changes in kinetics, and/or substantial shifts in the voltage dependencies of the inactivation process. The polypeptide is Delayed-rectifier potassium channel regulatory subunit KCNS1 (Papio anubis (Olive baboon)).